We begin with the raw amino-acid sequence, 486 residues long: Probable cytosol aminopeptidase (486 aa).

The Mn(2+) site is built by K256 and D261. Residue K268 is part of the active site. Mn(2+) is bound by residues D280, D339, and E341. The active site involves R343.

This sequence belongs to the peptidase M17 family. The cofactor is Mn(2+).

The protein localises to the cytoplasm. It carries out the reaction Release of an N-terminal amino acid, Xaa-|-Yaa-, in which Xaa is preferably Leu, but may be other amino acids including Pro although not Arg or Lys, and Yaa may be Pro. Amino acid amides and methyl esters are also readily hydrolyzed, but rates on arylamides are exceedingly low.. It catalyses the reaction Release of an N-terminal amino acid, preferentially leucine, but not glutamic or aspartic acids.. Presumably involved in the processing and regular turnover of intracellular proteins. Catalyzes the removal of unsubstituted N-terminal amino acids from various peptides. The polypeptide is Probable cytosol aminopeptidase (Synechococcus sp. (strain ATCC 27144 / PCC 6301 / SAUG 1402/1) (Anacystis nidulans)).